A 226-amino-acid chain; its full sequence is Type-5 uracil-DNA glycosylase (226 aa).

Residues cysteine 23, cysteine 26, cysteine 125, and cysteine 140 each contribute to the [4Fe-4S] cluster site.

It belongs to the uracil-DNA glycosylase (UDG) superfamily. Type 5 (UDGb) family.

Functionally, DNA glycosylase with broad substrate specificity. Can remove uracil from double-stranded DNA containing either a U/G or U/A base pair. Can also process hydroxymethyluracil (mispaired with guanine or adenine), hypoxanthine and fluorouracil. Exhibits a clear preference for double-stranded DNA substrates, but can also process uracil in single-stranded DNA, with lower efficiency. The polypeptide is Type-5 uracil-DNA glycosylase (Pyrobaculum aerophilum (strain ATCC 51768 / DSM 7523 / JCM 9630 / CIP 104966 / NBRC 100827 / IM2)).